The primary structure comprises 412 residues: Probable ribonuclease FAU-1 (412 aa).

The protein belongs to the FAU-1 family.

Probable RNase involved in rRNA stability through maturation and/or degradation of precursor rRNAs. Binds to RNA in loop regions with AU-rich sequences. This is Probable ribonuclease FAU-1 from Sulfurisphaera tokodaii (strain DSM 16993 / JCM 10545 / NBRC 100140 / 7) (Sulfolobus tokodaii).